Here is a 105-residue protein sequence, read N- to C-terminus: Met repressor (105 aa).

It belongs to the MetJ family. Homodimer.

It localises to the cytoplasm. Functionally, this regulatory protein, when combined with SAM (S-adenosylmethionine) represses the expression of the methionine regulon and of enzymes involved in SAM synthesis. In Pectobacterium carotovorum subsp. carotovorum (strain PC1), this protein is Met repressor.